We begin with the raw amino-acid sequence, 317 residues long: Methionyl-tRNA formyltransferase (317 aa).

112–115 (SLLP) is a binding site for (6S)-5,6,7,8-tetrahydrofolate.

This sequence belongs to the Fmt family.

The catalysed reaction is L-methionyl-tRNA(fMet) + (6R)-10-formyltetrahydrofolate = N-formyl-L-methionyl-tRNA(fMet) + (6S)-5,6,7,8-tetrahydrofolate + H(+). Functionally, attaches a formyl group to the free amino group of methionyl-tRNA(fMet). The formyl group appears to play a dual role in the initiator identity of N-formylmethionyl-tRNA by promoting its recognition by IF2 and preventing the misappropriation of this tRNA by the elongation apparatus. This Mycoplasma capricolum subsp. capricolum (strain California kid / ATCC 27343 / NCTC 10154) protein is Methionyl-tRNA formyltransferase.